We begin with the raw amino-acid sequence, 72 residues long: DNA-directed RNA polymerase subunit omega (72 aa).

Belongs to the RNA polymerase subunit omega family. The RNAP catalytic core consists of 2 alpha, 1 beta, 1 beta' and 1 omega subunit. When a sigma factor is associated with the core the holoenzyme is formed, which can initiate transcription.

The enzyme catalyses RNA(n) + a ribonucleoside 5'-triphosphate = RNA(n+1) + diphosphate. In terms of biological role, promotes RNA polymerase assembly. Latches the N- and C-terminal regions of the beta' subunit thereby facilitating its interaction with the beta and alpha subunits. The polypeptide is DNA-directed RNA polymerase subunit omega (Campylobacter lari (strain RM2100 / D67 / ATCC BAA-1060)).